The primary structure comprises 285 residues: N-alpha-acetyltransferase 40 (285 aa).

The N-acetyltransferase domain occupies 88–274 (INYKLHKSRG…GGGRVVVPCD (187 aa)). Residues tyrosine 116, 163–165 (TEE), and tyrosine 185 each bind substrate. Residues 187–189 (VHV) and 195–200 (GHGIGR) each bind acetyl-CoA. A substrate-binding site is contributed by threonine 228. Asparagine 233 is an acetyl-CoA binding site.

Belongs to the acetyltransferase family. NAA40 subfamily.

It localises to the nucleus. Its subcellular location is the cytoplasm. It catalyses the reaction N-terminal L-seryl-[histone H4] + acetyl-CoA = N-terminal N(alpha)-acetyl-L-seryl-[histone H4] + CoA + H(+). It carries out the reaction N-terminal L-seryl-[histone H2A] + acetyl-CoA = N-terminal N(alpha)-acetyl-L-seryl-[histone H2A] + CoA + H(+). In terms of biological role, N-alpha-acetyltransferase that specifically mediates the acetylation of the N-terminal residues of histones H4 and H2A. The chain is N-alpha-acetyltransferase 40 from Saccharomyces cerevisiae (strain ATCC 204508 / S288c) (Baker's yeast).